Here is a 370-residue protein sequence, read N- to C-terminus: Endopolygalacturonase A (370 aa).

An N-terminal signal peptide occupies residues 1 to 19 (MPSAKPLFCLATLAGAALA). Positions 20 to 32 (APAPSRATDFNKR) are excised as a propeptide. C35 and C50 are disulfide-bonded. PbH1 repeat units lie at residues 162–192 (SDNL…DISE), 193–214 (STYI…AINS), 215–235 (GENI…SIGS), 244–265 (VKNV…RIKT), 273–295 (VEDI…VIEQ), and 307–352 (SNGV…DITG). An intrachain disulfide couples C209 to C225. H229 is a catalytic residue. N246 is a glycosylation site (N-linked (GlcNAc...) asparagine). 2 disulfides stabilise this stretch: C335–C340 and C359–C368.

It belongs to the glycosyl hydrolase 28 family.

It is found in the secreted. It carries out the reaction (1,4-alpha-D-galacturonosyl)n+m + H2O = (1,4-alpha-D-galacturonosyl)n + (1,4-alpha-D-galacturonosyl)m.. Involved in maceration and soft-rotting of plant tissue. Hydrolyzes the 1,4-alpha glycosidic bonds of de-esterified pectate in the smooth region of the plant cell wall. This is Endopolygalacturonase A (pgaA) from Aspergillus awamori (Black koji mold).